A 366-amino-acid polypeptide reads, in one-letter code: 5-hydroxytryptamine receptor 1F (366 aa).

Over 1-24 the chain is Extracellular; sequence MDFLNSSDQNLTSEELLNRMPSKI. N-linked (GlcNAc...) asparagine glycosylation is found at asparagine 5 and asparagine 10. The helical transmembrane segment at 25 to 49 threads the bilayer; the sequence is LVSLTLSGLALMTTTINSLVIAAII. Topologically, residues 50 to 59 are cytoplasmic; sequence VTRKLHHPAN. Residues 60–81 form a helical membrane-spanning segment; that stretch reads YLICSLAVTDFLVAVLVMPFSI. Over 82–96 the chain is Extracellular; that stretch reads VYIVRESWIMGQVVC. Cysteine 96 and cysteine 172 are oxidised to a cystine. A helical membrane pass occupies residues 97-119; that stretch reads DIWLSVDITCCTCSILHLSAIAL. Positions 103 and 107 each coordinate serotonin. A DRY motif; important for ligand-induced conformation changes motif is present at residues 120-122; sequence DRY. The Cytoplasmic portion of the chain corresponds to 120–139; sequence DRYRAITDAVEYARKRTPKH. The chain crosses the membrane as a helical span at residues 140–159; it reads AGIMITIVWIISVFISMPPL. Topologically, residues 160–178 are extracellular; the sequence is FWRHQGTSRDDECIIKHDH. Residues 179–202 form a helical membrane-spanning segment; that stretch reads IVSTIYSTFGAFYIPLALILILYY. Over 203 to 291 the chain is Cytoplasmic; sequence KIYRAAKTLY…KISGTRERKA (89 aa). Residues 292-315 traverse the membrane as a helical segment; sequence ATTLGLILGAFVICWLPFFVKELV. Residues 316 to 327 are Extracellular-facing; that stretch reads VNVCDKCKISEE. A helical membrane pass occupies residues 328–350; sequence MSNFLAWLGYLNSLINPLIYTIF. The NPxxY motif; important for ligand-induced conformation changes and signaling signature appears at 343-347; the sequence is NPLIY. The Cytoplasmic portion of the chain corresponds to 351 to 366; the sequence is NEDFKKAFQKLVRCRC.

It belongs to the G-protein coupled receptor 1 family.

The protein localises to the cell membrane. Its function is as follows. G-protein coupled receptor for 5-hydroxytryptamine (serotonin). Also functions as a receptor for various alkaloids and psychoactive substances. Receptor for lasmiditan, a drug for the treatment of acute migraine. Ligand binding causes a conformation change that triggers signaling via guanine nucleotide-binding proteins (G proteins) and modulates the activity of downstream effectors, such as adenylate cyclase. HTR1F is coupled to G(i)/G(o) G alpha proteins and mediates inhibitory neurotransmission by inhibiting adenylate cyclase activity. The chain is 5-hydroxytryptamine receptor 1F from Homo sapiens (Human).